The chain runs to 515 residues: Fatty acyl-CoA reductase 2 (515 aa).

At 1-465 (MSMIAAFYGG…AKQHLKRLRN (465 aa)) the chain is on the cytoplasmic side. The chain crosses the membrane as a helical span at residues 466–484 (IHYLFNTALFLIAWRLLIA). At 485-515 (RSQVARNVWFFIVSFCYKFLSYFRASSTLNV) the chain is on the peroxisomal side.

This sequence belongs to the fatty acyl-CoA reductase family.

The protein localises to the peroxisome membrane. It catalyses the reaction a long-chain fatty acyl-CoA + 2 NADPH + 2 H(+) = a long-chain primary fatty alcohol + 2 NADP(+) + CoA. The enzyme catalyses hexadecanoyl-CoA + 2 NADPH + 2 H(+) = hexadecan-1-ol + 2 NADP(+) + CoA. The catalysed reaction is octadecanoyl-CoA + 2 NADPH + 2 H(+) = octadecan-1-ol + 2 NADP(+) + CoA. It carries out the reaction a very long-chain fatty acyl-CoA + 2 NADPH + 2 H(+) = a very long-chain primary fatty alcohol + 2 NADP(+) + CoA. It catalyses the reaction an ultra-long-chain fatty acyl-CoA + 2 NADPH + 2 H(+) = an ultra long-chain primary fatty alcohol + 2 NADP(+) + CoA. The enzyme catalyses eicosanoyl-CoA + 2 NADPH + 2 H(+) = eicosan-1-ol + 2 NADP(+) + CoA. The catalysed reaction is docosanoyl-CoA + 2 NADPH + 2 H(+) = docosan-1-ol + 2 NADP(+) + CoA. It carries out the reaction tetracosanoyl-CoA + 2 NADPH + 2 H(+) = tetracosan-1-ol + 2 NADP(+) + CoA. It catalyses the reaction hexacosanoyl-CoA + 2 NADPH + 2 H(+) = hexacosan-1-ol + 2 NADP(+) + CoA. The enzyme catalyses octacosanoyl-CoA + 2 NADPH + 2 H(+) = octacosan-1-ol + 2 NADP(+) + CoA. The catalysed reaction is triacontanoyl-CoA + 2 NADPH + 2 H(+) = triacontan-1-ol + 2 NADP(+) + CoA. It carries out the reaction 18-methylnonadecanoyl-CoA + 2 NADPH + 2 H(+) = 18-methylnonadecan-1-ol + 2 NADP(+) + CoA. It catalyses the reaction 20-methylheneicosanoyl-CoA + 2 NADPH + 2 H(+) = 20-methylheneicosan-1-ol + 2 NADP(+) + CoA. The enzyme catalyses 22-methyltricosanoyl-CoA + 2 NADPH + 2 H(+) = 22-methyltricosan-1-ol + 2 NADP(+) + CoA. The catalysed reaction is 24-methylpentacosanoyl-CoA + 2 NADPH + 2 H(+) = 24-methylpentacosan-1-ol + 2 NADP(+) + CoA. In terms of biological role, catalyzes the reduction of saturated but not unsaturated C16 or C18 fatty acyl-CoA to fatty alcohols (FAls). A lower activity can be observed with shorter fatty acyl-CoA substrates. Can produce very long-chain and ultra long-chain FAls, regardless of whether they have a straight or branched chain. Involved in the production of ether lipids/plasmalogens and wax monoesters whose synthesis requires FAls as substrates. The chain is Fatty acyl-CoA reductase 2 from Bos taurus (Bovine).